The sequence spans 343 residues: Dihydroorotase (343 aa).

Zn(2+) contacts are provided by His13 and His15. Substrate contacts are provided by residues 15 to 17 and Asn41; that span reads HLR. Positions 99, 136, and 174 each coordinate Zn(2+). Lys99 carries the post-translational modification N6-carboxylysine. His136 is a substrate binding site. Leu219 lines the substrate pocket. Asp247 contacts Zn(2+). Asp247 is an active-site residue. Residues His251 and Ala263 each contribute to the substrate site.

Belongs to the metallo-dependent hydrolases superfamily. DHOase family. Class II DHOase subfamily. As to quaternary structure, homodimer. Zn(2+) serves as cofactor.

It carries out the reaction (S)-dihydroorotate + H2O = N-carbamoyl-L-aspartate + H(+). Its pathway is pyrimidine metabolism; UMP biosynthesis via de novo pathway; (S)-dihydroorotate from bicarbonate: step 3/3. In terms of biological role, catalyzes the reversible cyclization of carbamoyl aspartate to dihydroorotate. This is Dihydroorotase from Shewanella oneidensis (strain ATCC 700550 / JCM 31522 / CIP 106686 / LMG 19005 / NCIMB 14063 / MR-1).